The primary structure comprises 253 residues: Phosphoglycerate mutase 2 (253 aa).

Position 3 is a phosphothreonine (T3). Substrate-binding positions include R10–N17, C23–G24, R62, E89–Y92, K100, and R116–R117. H11 functions as the Tele-phosphohistidine intermediate in the catalytic mechanism. The residue at position 14 (S14) is a Phosphoserine. E89 (proton donor/acceptor) is an active-site residue. Position 118 is a phosphoserine (S118). T121 is modified (phosphothreonine). A phosphotyrosine mark is found at Y132 and Y133. S135 carries the phosphoserine modification. The residue at position 152 (T152) is a Phosphothreonine. Residue G187–N188 coordinates substrate.

Belongs to the phosphoglycerate mutase family. BPG-dependent PGAM subfamily. In terms of assembly, homodimer. Interacts with ENO1. In terms of tissue distribution, expressed in the testes (at protein level).

The enzyme catalyses (2R)-2-phosphoglycerate = (2R)-3-phosphoglycerate. The catalysed reaction is (2R)-3-phospho-glyceroyl phosphate = (2R)-2,3-bisphosphoglycerate + H(+). In terms of biological role, interconversion of 3- and 2-phosphoglycerate with 2,3-bisphosphoglycerate as the primer of the reaction. Can also catalyze the reaction of EC 5.4.2.4 (synthase), but with a reduced activity. The sequence is that of Phosphoglycerate mutase 2 (Pgam2) from Mus musculus (Mouse).